We begin with the raw amino-acid sequence, 164 residues long: UPF0114 protein YqhA (164 aa).

3 consecutive transmembrane segments (helical) span residues 15–35 (LLAP…LKFF), 53–73 (LILV…LVMV), and 136–156 (LMWY…MGYL).

Belongs to the UPF0114 family.

The protein resides in the cell membrane. This is UPF0114 protein YqhA from Shigella dysenteriae serotype 1 (strain Sd197).